The following is an 861-amino-acid chain: Probable linoleate 9S-lipoxygenase 7 (861 aa).

Positions 29 to 160 constitute a PLAT domain; sequence NVLDFTDLAG…NYKSDRIFFA (132 aa). The region spanning 163-861 is the Lipoxygenase domain; the sequence is PYLPSETPEL…GKGIPNSVSI (699 aa). The segment at 220 to 246 is disordered; the sequence is TLGGSAEYPYPRRGRTGRPPTRTDPKS. Fe cation contacts are provided by His-522, His-527, His-713, Asn-717, and Ile-861.

It belongs to the lipoxygenase family. In terms of assembly, monomer. Requires Fe cation as cofactor. As to expression, expressed in tubers. Detected in sprouts and flowers. but not in leaves or stems.

The protein resides in the cytoplasm. The enzyme catalyses (9Z,12Z)-octadecadienoate + O2 = (9S)-hydroperoxy-(10E,12Z)-octadecadienoate. Its pathway is lipid metabolism; oxylipin biosynthesis. In terms of biological role, plant lipoxygenases may be involved in a number of diverse aspects of plant physiology including growth and development, pest resistance, and senescence or responses to wounding. Catalyzes the hydroperoxidation of lipids containing a cis,cis-1,4-pentadiene structure. The polypeptide is Probable linoleate 9S-lipoxygenase 7 (LOX1.7) (Solanum tuberosum (Potato)).